Reading from the N-terminus, the 520-residue chain is Pleckstrin homology domain-containing family A member 8 (520 aa).

The PH domain maps to 1 to 93; it reads MEGVLYKWTN…WLVALGSAKA (93 aa). Thr-139 is subject to Phosphothreonine. A Phosphoserine modification is found at Ser-145. A Phosphothreonine modification is found at Thr-153. The segment covering 255-268 has biased composition (polar residues); the sequence is ISSEENTDGNTTVQ. The segment at 255 to 303 is disordered; the sequence is ISSEENTDGNTTVQGERMKEDGEENLESHDRDLAQPGSDSVCSPESPWE. A compositionally biased stretch (basic and acidic residues) spans 270–287; sequence ERMKEDGEENLESHDRDL. The segment at 311–520 is glycolipid transfer protein homology domain; sequence TFFSTMNTSF…IHGLESDEVV (210 aa).

In terms of assembly, homodimer. Interacts with ARF1; the interaction together with phosphatidylinositol 4-phosphate binding is required for FAPP2 GlcCer transfer ability.

It localises to the golgi apparatus. The protein localises to the trans-Golgi network membrane. Its subcellular location is the membrane. In terms of biological role, cargo transport protein that is required for apical transport from the trans-Golgi network (TGN). Transports AQP2 from the trans-Golgi network (TGN) to sites of AQP2 phosphorylation. Mediates the non-vesicular transport of glucosylceramide (GlcCer) from the trans-Golgi network (TGN) to the plasma membrane and plays a pivotal role in the synthesis of complex glycosphingolipids. Binding of both phosphatidylinositol 4-phosphate (PIP) and ARF1 are essential for the GlcCer transfer ability. Also required for primary cilium formation, possibly by being involved in the transport of raft lipids to the apical membrane, and for membrane tubulation. This is Pleckstrin homology domain-containing family A member 8 (Plekha8) from Rattus norvegicus (Rat).